Here is a 921-residue protein sequence, read N- to C-terminus: Isoleucine--tRNA ligase (921 aa).

Residues 59-69 (PYANGHLHIGH) carry the 'HIGH' region motif. Glutamate 569 is a binding site for L-isoleucyl-5'-AMP. Residues 610-614 (KMSKS) carry the 'KMSKS' region motif. Lysine 613 serves as a coordination point for ATP. Residues cysteine 896, cysteine 899, cysteine 911, and cysteine 914 each coordinate Zn(2+).

This sequence belongs to the class-I aminoacyl-tRNA synthetase family. IleS type 1 subfamily. Monomer. It depends on Zn(2+) as a cofactor.

The protein resides in the cytoplasm. It catalyses the reaction tRNA(Ile) + L-isoleucine + ATP = L-isoleucyl-tRNA(Ile) + AMP + diphosphate. Its function is as follows. Catalyzes the attachment of isoleucine to tRNA(Ile). As IleRS can inadvertently accommodate and process structurally similar amino acids such as valine, to avoid such errors it has two additional distinct tRNA(Ile)-dependent editing activities. One activity is designated as 'pretransfer' editing and involves the hydrolysis of activated Val-AMP. The other activity is designated 'posttransfer' editing and involves deacylation of mischarged Val-tRNA(Ile). The polypeptide is Isoleucine--tRNA ligase (Campylobacter hominis (strain ATCC BAA-381 / DSM 21671 / CCUG 45161 / LMG 19568 / NCTC 13146 / CH001A)).